A 294-amino-acid polypeptide reads, in one-letter code: 33 kDa chaperonin (294 aa).

2 disulfide bridges follow: C239-C241 and C272-C275.

It belongs to the HSP33 family. In terms of processing, under oxidizing conditions two disulfide bonds are formed involving the reactive cysteines. Under reducing conditions zinc is bound to the reactive cysteines and the protein is inactive.

Its subcellular location is the cytoplasm. Its function is as follows. Redox regulated molecular chaperone. Protects both thermally unfolding and oxidatively damaged proteins from irreversible aggregation. Plays an important role in the bacterial defense system toward oxidative stress. The chain is 33 kDa chaperonin from Listeria monocytogenes serovar 1/2a (strain ATCC BAA-679 / EGD-e).